Reading from the N-terminus, the 499-residue chain is Cytochrome P450 2M1 (499 aa).

Cysteine 441 lines the heme pocket.

Belongs to the cytochrome P450 family. Requires heme as cofactor. In terms of tissue distribution, in kidney and in liver from juvenile and sexually mature trout from both sexes.

The protein localises to the endoplasmic reticulum membrane. It localises to the microsome membrane. The enzyme catalyses an organic molecule + reduced [NADPH--hemoprotein reductase] + O2 = an alcohol + oxidized [NADPH--hemoprotein reductase] + H2O + H(+). Functionally, has (omega-6)-hydroxylation activity toward lauric acid. The chain is Cytochrome P450 2M1 (cyp2m1) from Oncorhynchus mykiss (Rainbow trout).